Consider the following 244-residue polypeptide: Acetoacetate decarboxylase (244 aa).

The active-site Schiff-base intermediate with acetoacetate is the Lys-115.

This sequence belongs to the ADC family.

It carries out the reaction acetoacetate + H(+) = acetone + CO2. Functionally, catalyzes the conversion of acetoacetate to acetone and carbon dioxide. The chain is Acetoacetate decarboxylase from Streptomyces nogalater.